A 101-amino-acid polypeptide reads, in one-letter code: RNA-binding protein Hfq (101 aa).

The region spanning 9 to 68 (DPFLNALRRERVPVSIYLVNGIKLQGQVESFDQFVILLKNTVSQMVYKHAISTVVPSPPV) is the Sm domain. Residues 62 to 101 (VVPSPPVSHHSNTPSGSTNNYHGSNPSAPQQPQQDSDDAE) form a disordered region. Positions 70 to 86 (HHSNTPSGSTNNYHGSN) are enriched in polar residues.

It belongs to the Hfq family. As to quaternary structure, homohexamer.

In terms of biological role, RNA chaperone that binds small regulatory RNA (sRNAs) and mRNAs to facilitate mRNA translational regulation in response to envelope stress, environmental stress and changes in metabolite concentrations. Also binds with high specificity to tRNAs. This is RNA-binding protein Hfq from Yersinia pestis (strain Pestoides F).